Consider the following 258-residue polypeptide: Acetylglutamate kinase (258 aa).

Substrate is bound by residues 41-42 (GG), arginine 63, and asparagine 156.

The protein belongs to the acetylglutamate kinase family. ArgB subfamily.

It is found in the cytoplasm. The enzyme catalyses N-acetyl-L-glutamate + ATP = N-acetyl-L-glutamyl 5-phosphate + ADP. It participates in amino-acid biosynthesis; L-arginine biosynthesis; N(2)-acetyl-L-ornithine from L-glutamate: step 2/4. Its function is as follows. Catalyzes the ATP-dependent phosphorylation of N-acetyl-L-glutamate. This is Acetylglutamate kinase from Bacillus velezensis (strain DSM 23117 / BGSC 10A6 / LMG 26770 / FZB42) (Bacillus amyloliquefaciens subsp. plantarum).